The chain runs to 265 residues: 14-3-3-like protein GF14 nu (265 aa).

Residues Ser67, Ser109, and Ser190 each carry the phosphoserine modification. Phosphothreonine is present on Thr211. A disordered region spans residues Ala242–Gln265. A compositionally biased stretch (basic and acidic residues) spans Asp245–Gln265.

This sequence belongs to the 14-3-3 family. As to quaternary structure, component of the SERK1 signaling complex, composed of KAPP, CDC48A, GRF6 or GRF7, SERK1, SERK2, SERK3/BAK1 and BRI1. Interacts with DREB1A and DREB1B in the nucleus. Interacts with CINV1.

The protein localises to the nucleus. The protein resides in the cytoplasm. In terms of biological role, is associated with a DNA binding complex that binds to the G box, a well-characterized cis-acting DNA regulatory element found in plant genes. In Arabidopsis thaliana (Mouse-ear cress), this protein is 14-3-3-like protein GF14 nu (GRF7).